A 68-amino-acid polypeptide reads, in one-letter code: MSAKKSASKATVTVQQIGSPLRREPSQRQTLIGLGLNKMRRTKTLEDTPAVRGMINKVAHLVRVVDEA.

The tract at residues methionine 1–serine 26 is disordered. Residues serine 8–glycine 18 show a composition bias toward polar residues.

It belongs to the universal ribosomal protein uL30 family. As to quaternary structure, part of the 50S ribosomal subunit.

The protein is Large ribosomal subunit protein uL30 of Parvibaculum lavamentivorans (strain DS-1 / DSM 13023 / NCIMB 13966).